The primary structure comprises 628 residues: tRNA uridine 5-carboxymethylaminomethyl modification enzyme MnmG (628 aa).

13 to 18 (GAGHAG) lines the FAD pocket. 273 to 287 (GPRYCPSIEDKIVRF) contributes to the NAD(+) binding site.

The protein belongs to the MnmG family. Homodimer. Heterotetramer of two MnmE and two MnmG subunits. The cofactor is FAD.

It is found in the cytoplasm. In terms of biological role, NAD-binding protein involved in the addition of a carboxymethylaminomethyl (cmnm) group at the wobble position (U34) of certain tRNAs, forming tRNA-cmnm(5)s(2)U34. This chain is tRNA uridine 5-carboxymethylaminomethyl modification enzyme MnmG, found in Buchnera aphidicola subsp. Acyrthosiphon pisum (strain APS) (Acyrthosiphon pisum symbiotic bacterium).